Here is a 2180-residue protein sequence, read N- to C-terminus: DNA polymerase epsilon catalytic subunit A (2180 aa).

C2067, C2070, C2089, and C2092 together coordinate Zn(2+). A CysA-type zinc finger spans residues 2067–2092 (CENCAYFSDLDICMSDLRSMFKCSKC). Residues C2123, C2126, C2138, and C2140 each contribute to the [4Fe-4S] cluster site. Residues 2123 to 2140 (CAKCRKIKSDTMSAYCTC) carry the CysB motif motif.

Belongs to the DNA polymerase type-B family. Heterotetramer. Consists of 4 subunits: POL2, DPB2, DPB3 and DPB4. [4Fe-4S] cluster is required as a cofactor.

It is found in the nucleus. The enzyme catalyses DNA(n) + a 2'-deoxyribonucleoside 5'-triphosphate = DNA(n+1) + diphosphate. DNA polymerase II participates in chromosomal DNA replication. This chain is DNA polymerase epsilon catalytic subunit A (POL2), found in Eremothecium gossypii (strain ATCC 10895 / CBS 109.51 / FGSC 9923 / NRRL Y-1056) (Yeast).